The following is a 215-amino-acid chain: Urease accessory protein UreG (215 aa).

Position 24-31 (24-31 (GPVGSGKT)) interacts with GTP.

The protein belongs to the SIMIBI class G3E GTPase family. UreG subfamily. As to quaternary structure, homodimer. UreD, UreF and UreG form a complex that acts as a GTP-hydrolysis-dependent molecular chaperone, activating the urease apoprotein by helping to assemble the nickel containing metallocenter of UreC. The UreE protein probably delivers the nickel.

The protein localises to the cytoplasm. In terms of biological role, facilitates the functional incorporation of the urease nickel metallocenter. This process requires GTP hydrolysis, probably effectuated by UreG. The chain is Urease accessory protein UreG from Burkholderia ambifaria (strain MC40-6).